Here is a 161-residue protein sequence, read N- to C-terminus: MDQEAVGNVVLLALVTLISVVQNAFFAHKVEHESKAHNGRSFQRTGTLAFERVYTANQNCVDAYPTFLVVLWTAGLLCSQVPAAFAGLMYLFVRQKYFVGYLGERTQSTPGYIFGKRIILFLFLMSFAGILNHYLIFFFGSDFENYIRTVSTTISPLLLIP.

At 1–8 the chain is on the lumenal side; sequence MDQEAVGN. A helical transmembrane segment spans residues 9–30; sequence VVLLALVTLISVVQNAFFAHKV. The Cytoplasmic portion of the chain corresponds to 31–52; it reads EHESKAHNGRSFQRTGTLAFER. Residues 53–77 form a helical membrane-spanning segment; the sequence is VYTANQNCVDAYPTFLVVLWTAGLL. Over 78-80 the chain is Lumenal; it reads CSQ. A helical transmembrane segment spans residues 81-102; it reads VPAAFAGLMYLFVRQKYFVGYL. Topologically, residues 103 to 107 are cytoplasmic; the sequence is GERTQ. An intramembrane segment occupies 108 to 115; sequence STPGYIFG. Residues 116–128 form a helical membrane-spanning segment; the sequence is KRIILFLFLMSFA. The Lumenal portion of the chain corresponds to 129 to 161; that stretch reads GILNHYLIFFFGSDFENYIRTVSTTISPLLLIP.

It belongs to the MAPEG family. In terms of assembly, homotrimer. Interacts with LTC4S and ALOX5.

It localises to the nucleus membrane. The protein localises to the endoplasmic reticulum membrane. In terms of biological role, required for leukotriene biosynthesis by ALOX5 (5-lipoxygenase). Anchors ALOX5 to the membrane. Binds arachidonic acid, and could play an essential role in the transfer of arachidonic acid to ALOX5. Binds to MK-886, a compound that blocks the biosynthesis of leukotrienes. The chain is Arachidonate 5-lipoxygenase-activating protein (Alox5ap) from Mus musculus (Mouse).